Reading from the N-terminus, the 460-residue chain is MTDLVSLSPKPASAPGTRPAAARKVYVHTFGCQMNASDSDRMIELLGRHAFARAETPDDADLILLNTCAVREKAEQKLLSALGRYREVKARRGALIAVSGCVAQQEKDRLLARVPYVDFVFGPDNIGKLPEMVARAERERFAETGWMDSQDYVFPQADPEAARGRPTAFVTAMKGCDNVCAFCIVPHTRGREVSRAFPEIVAECASLAEVGVREVTLIGQNVNSYAGGCTFAELLRRVAAVPGIARIRFTTSHPHDLSDALVAVFRDEPKVMPHFHLPVQSGSDAVLARMRRDYTVAEYLDRFDRLRAARPGIAITTDFIVGFPGEGEADFEGSLALLERARFEQSFSFLFSPRPKTVANLRLGTAPEWQEIPRAVAVERLERLQAAQRRIAAAALAAELGKVVEVLVEGASDEPGERLGRTPENRVVHLAADEAGAPTGALVRARITRAGGSSLSGTPA.

In terms of domain architecture, MTTase N-terminal spans 23–138 (RKVYVHTFGC…LPEMVARAER (116 aa)). Cys32, Cys68, Cys101, Cys176, Cys180, and Cys183 together coordinate [4Fe-4S] cluster. Residues 162-394 (ARGRPTAFVT…QAAQRRIAAA (233 aa)) form the Radical SAM core domain. A TRAM domain is found at 397 to 460 (AAELGKVVEV…GGSSLSGTPA (64 aa)).

It belongs to the methylthiotransferase family. MiaB subfamily. In terms of assembly, monomer. Requires [4Fe-4S] cluster as cofactor.

Its subcellular location is the cytoplasm. It carries out the reaction N(6)-dimethylallyladenosine(37) in tRNA + (sulfur carrier)-SH + AH2 + 2 S-adenosyl-L-methionine = 2-methylsulfanyl-N(6)-dimethylallyladenosine(37) in tRNA + (sulfur carrier)-H + 5'-deoxyadenosine + L-methionine + A + S-adenosyl-L-homocysteine + 2 H(+). Catalyzes the methylthiolation of N6-(dimethylallyl)adenosine (i(6)A), leading to the formation of 2-methylthio-N6-(dimethylallyl)adenosine (ms(2)i(6)A) at position 37 in tRNAs that read codons beginning with uridine. The polypeptide is tRNA-2-methylthio-N(6)-dimethylallyladenosine synthase (Anaeromyxobacter sp. (strain Fw109-5)).